The primary structure comprises 1001 residues: O-GlcNAcase NagJ (1001 aa).

Residues 1–30 form the signal peptide; the sequence is MKRKMLKRLLTSAFACMFIANGLITTTVRA. The catalytic domain stretch occupies residues 179-469; sequence VSARGIVEGF…WNRAIDMLYG (291 aa). The 273-residue stretch at 180–452 folds into the GH84 domain; sequence SARGIVEGFY…TAADYSWNMD (273 aa). A protein-binding residues include glycine 187, lysine 218, and aspartate 297. Aspartate 298 acts as the Proton donor in catalysis. A protein-binding positions include tyrosine 335, 394 to 396, aspartate 401, and asparagine 429; that span reads WWN. Coiled-coil stretches lie at residues 515 to 543 and 573 to 597; these read KEDA…KANL and VAQL…LNTA. In terms of domain architecture, Fibronectin type-III spans 916–1001; it reads PVRDFKASEI…KESLTLRTAR (86 aa).

This sequence belongs to the glycosyl hydrolase 84 family.

It catalyses the reaction 3-O-(N-acetyl-beta-D-glucosaminyl)-L-seryl-[protein] + H2O = N-acetyl-D-glucosamine + L-seryl-[protein]. It carries out the reaction 3-O-(N-acetyl-beta-D-glucosaminyl)-L-threonyl-[protein] + H2O = L-threonyl-[protein] + N-acetyl-D-glucosamine. Inhibited by O-(2-acetamido-2-deoxy-D-glucopyranosylidene)amino-N-phenyl-carbamate (PUGNAc) and streptozotocin. In terms of biological role, binds carbohydrates. Capable of hydrolyzing the glycosidic link of O-GlcNAcylated proteins. Can bind and deglycosylate O-glycosylated peptides from mammals. This chain is O-GlcNAcase NagJ (nagJ), found in Clostridium perfringens (strain ATCC 13124 / DSM 756 / JCM 1290 / NCIMB 6125 / NCTC 8237 / Type A).